Here is a 175-residue protein sequence, read N- to C-terminus: Isopentenyl-diphosphate Delta-isomerase (175 aa).

Mn(2+) is bound by residues histidine 22 and histidine 29. The region spanning 27–160 (KLHRAFSVLL…PAAYTPWLAE (134 aa)) is the Nudix hydrolase domain. Cysteine 64 is an active-site residue. Cysteine 64 is a binding site for Mg(2+). Mn(2+) is bound at residue histidine 66. Glutamate 84 serves as a coordination point for Mg(2+). Positions 110 and 112 each coordinate Mn(2+). Residue glutamate 112 is part of the active site.

This sequence belongs to the IPP isomerase type 1 family. Requires Mg(2+) as cofactor. The cofactor is Mn(2+).

It localises to the cytoplasm. It catalyses the reaction isopentenyl diphosphate = dimethylallyl diphosphate. Its pathway is isoprenoid biosynthesis; dimethylallyl diphosphate biosynthesis; dimethylallyl diphosphate from isopentenyl diphosphate: step 1/1. Functionally, catalyzes the 1,3-allylic rearrangement of the homoallylic substrate isopentenyl (IPP) to its highly electrophilic allylic isomer, dimethylallyl diphosphate (DMAPP). The polypeptide is Isopentenyl-diphosphate Delta-isomerase (Nocardia farcinica (strain IFM 10152)).